The primary structure comprises 368 residues: Mitogen-activated protein kinase 7 (368 aa).

The region spanning 32–319 is the Protein kinase domain; sequence YVPIKPIGRG…VTDALLHPYM (288 aa). ATP-binding positions include 38 to 46 and lysine 61; that span reads IGRGAYGVV. Aspartate 158 functions as the Proton acceptor in the catalytic mechanism. Threonine 191 carries the phosphothreonine modification. The short motif at 191-193 is the TXY element; it reads TEY. Tyrosine 193 bears the Phosphotyrosine mark. Threonine 196 bears the Phosphothreonine mark.

It belongs to the protein kinase superfamily. CMGC Ser/Thr protein kinase family. MAP kinase subfamily. As to quaternary structure, interacts with MKK3. Mg(2+) serves as cofactor. Post-translationally, dually phosphorylated on Thr-191 and Tyr-193, which activates the enzyme.

It catalyses the reaction L-seryl-[protein] + ATP = O-phospho-L-seryl-[protein] + ADP + H(+). It carries out the reaction L-threonyl-[protein] + ATP = O-phospho-L-threonyl-[protein] + ADP + H(+). Its activity is regulated as follows. Activated by threonine and tyrosine phosphorylation. Activated in response to hydrogen peroxide. Activation is triggered by MAPKKK17 and MAPKKK18 in a MKK3-dependent manner. MKK3-MPK7 module acts as a positive regulator of PR1 gene expression. The protein is Mitogen-activated protein kinase 7 (MPK7) of Arabidopsis thaliana (Mouse-ear cress).